Here is a 139-residue protein sequence, read N- to C-terminus: D-ribose pyranase (139 aa).

H20 serves as the catalytic Proton donor. Substrate is bound by residues D28, H106, and 128–130 (YAN).

Belongs to the RbsD / FucU family. RbsD subfamily. In terms of assembly, homodecamer.

The protein resides in the cytoplasm. It carries out the reaction beta-D-ribopyranose = beta-D-ribofuranose. The protein operates within carbohydrate metabolism; D-ribose degradation; D-ribose 5-phosphate from beta-D-ribopyranose: step 1/2. Functionally, catalyzes the interconversion of beta-pyran and beta-furan forms of D-ribose. The polypeptide is D-ribose pyranase (Salmonella choleraesuis (strain SC-B67)).